Reading from the N-terminus, the 361-residue chain is Feruloyl CoA ortho-hydroxylase 2 (361 aa).

One can recognise a Fe2OG dioxygenase domain in the interval 211–312 (GSTRINLNYY…RISVPIFVSP (102 aa)). Tyr-220 lines the 2-oxoglutarate pocket. Residues His-235, Asp-237, and His-293 each contribute to the Fe cation site. Residues Arg-303 and Ser-305 each contribute to the 2-oxoglutarate site.

It belongs to the iron/ascorbate-dependent oxidoreductase family. L-ascorbate is required as a cofactor. It depends on Fe(2+) as a cofactor. As to expression, low expression in roots.

It carries out the reaction (E)-feruloyl-CoA + 2-oxoglutarate + O2 = (E)-6-hydroxyferuloyl-CoA + succinate + CO2. It catalyses the reaction (E)-6-hydroxyferuloyl-CoA = scopoletin + CoA. Its function is as follows. 2-oxoglutarate (OG)- and Fe(II)-dependent dioxygenase (2OGD)involved in scopoletin biosynthesis. Converts feruloyl CoA into 6'-hydroxyferuloyl CoA but has no activity with ferulic acid, feruloylquinic acid, caffeic acid, caffeoyl CoA, p-coumaric acid, cinnamic acid, cinnamoyl CoA or benzoyl CoA. The polypeptide is Feruloyl CoA ortho-hydroxylase 2 (Arabidopsis thaliana (Mouse-ear cress)).